Consider the following 541-residue polypeptide: Probable inorganic phosphate transporter 1-8 (541 aa).

At 1–28 the chain is on the cytoplasmic side; sequence MARQEQQQHLQVLSALDAAKTQWYHFTA. The chain crosses the membrane as a helical span at residues 29-49; that stretch reads IVVAGMGFFTDAYDLFCISLV. Over 50–74 the chain is Extracellular; the sequence is TKLLGRIYYTDLAKENPGSLPPNVA. A helical membrane pass occupies residues 75-95; the sequence is AAVNGVAFCGTLAGQLFFGWL. Residues 96-102 are Cytoplasmic-facing; sequence GDKLGRK. A helical membrane pass occupies residues 103-123; it reads SVYGMTLLMMVICSIASGLSF. Topologically, residues 124-126 are extracellular; that stretch reads SHT. The chain crosses the membrane as a helical span at residues 127-147; it reads PTSVMATLCFFRFWLGFGIGG. Residues 148–168 lie on the Cytoplasmic side of the membrane; that stretch reads DYPLSATIMSEYANKKTRGAF. The helical transmembrane segment at 169–189 threads the bilayer; the sequence is IAAVFAMQGFGILAGGIVTLI. Over 190–215 the chain is Extracellular; sequence ISSAFRAGFPAPAYQDDRAGSTVRQA. The chain crosses the membrane as a helical span at residues 216-236; that stretch reads DYVWRIILMLGAMPALLTYYW. Over 237 to 297 the chain is Cytoplasmic; it reads RMKMPETARY…GLFSRQFARR (61 aa). A helical membrane pass occupies residues 298-318; it reads HGLHLVGTATTWFLLDIAFYS. Residues 319–353 lie on the Extracellular side of the membrane; that stretch reads QNLFQKDIFTSINWIPKAKTMSALEEVFRIARAQT. A helical transmembrane segment spans residues 354–374; that stretch reads LIALCGTVPGYWFTVFLIDIV. At 375–376 the chain is on the cytoplasmic side; it reads GR. A helical membrane pass occupies residues 377–397; the sequence is FAIQLLGFFMMTVFMLGLAVP. The Extracellular segment spans residues 398–404; it reads YHHWTTK. Residues 405–425 traverse the membrane as a helical segment; the sequence is GNHIGFVVMYAFTFFFANFGP. Over 426 to 447 the chain is Cytoplasmic; it reads NSTTFIVPAEIFPARLRSTCHG. Residues 448-468 traverse the membrane as a helical segment; it reads ISAAAGKAGAIIGSFGFLYAA. The Extracellular segment spans residues 469–486; that stretch reads QDPHKPDAGYKPGIGVRN. The helical transmembrane segment at 487 to 507 threads the bilayer; sequence SLFVLAGCNLLGFICTFLVPE. At 508 to 541 the chain is on the cytoplasmic side; sequence SKGKSLEEMSGEAEDDDDEVAAAGGGAAVRPQTA. The tract at residues 514 to 541 is disordered; sequence EEMSGEAEDDDDEVAAAGGGAAVRPQTA. Residues 516–527 are compositionally biased toward acidic residues; the sequence is MSGEAEDDDDEV.

The protein belongs to the major facilitator superfamily. Phosphate:H(+) symporter (TC 2.A.1.9) family.

It localises to the membrane. High-affinity transporter for external inorganic phosphate. This chain is Probable inorganic phosphate transporter 1-8 (PHT1-8), found in Oryza sativa subsp. japonica (Rice).